A 581-amino-acid polypeptide reads, in one-letter code: Arginine--tRNA ligase (581 aa).

Residues 126–136 (PNLAKEMHVGH) carry the 'HIGH' region motif.

The protein belongs to the class-I aminoacyl-tRNA synthetase family. Monomer.

It localises to the cytoplasm. It carries out the reaction tRNA(Arg) + L-arginine + ATP = L-arginyl-tRNA(Arg) + AMP + diphosphate. This is Arginine--tRNA ligase from Shewanella oneidensis (strain ATCC 700550 / JCM 31522 / CIP 106686 / LMG 19005 / NCIMB 14063 / MR-1).